The primary structure comprises 174 residues: Ribosome maturation factor RimM (174 aa).

In terms of domain architecture, PRC barrel spans 99–172; that stretch reads ADEFFYHDVI…RLVIRPIAGL (74 aa).

It belongs to the RimM family. As to quaternary structure, binds ribosomal protein uS19.

It localises to the cytoplasm. Its function is as follows. An accessory protein needed during the final step in the assembly of 30S ribosomal subunit, possibly for assembly of the head region. Essential for efficient processing of 16S rRNA. May be needed both before and after RbfA during the maturation of 16S rRNA. It has affinity for free ribosomal 30S subunits but not for 70S ribosomes. This chain is Ribosome maturation factor RimM, found in Chloroflexus aurantiacus (strain ATCC 29366 / DSM 635 / J-10-fl).